Consider the following 529-residue polypeptide: Potassium voltage-gated channel subfamily A member 6 (529 aa).

Residues 1 to 33 (MRSEKSLTLAAPGEVRGPEGEQQDAGDFPEAGG) form a disordered region. At 1 to 171 (MRSEKSLTLA…LLFEYPESSG (171 aa)) the chain is on the cytoplasmic side. Position 3 is a phosphoserine (Ser3). Residues 172–193 (PARGIAIVSVLVILISIVIFCL) form a helical membrane-spanning segment. Residues 194 to 262 (ETLPQFRVDG…TLGGSFFTDP (69 aa)) are Extracellular-facing. Over residues 210-220 (GVSRVSPVSRG) the composition is skewed to low complexity. The tract at residues 210-233 (GVSRVSPVSRGSQEEEEDEDDSYT) is disordered. The chain crosses the membrane as a helical span at residues 263–284 (FFLVETLCIVWFTFELLVRFSA). Residue Cys285 is the site of S-palmitoyl cysteine attachment. Residues 285 to 295 (CPSKPAFFRNI) are Cytoplasmic-facing. Residues 296-316 (MNIIDLVAIFPYFITLGTELV) traverse the membrane as a helical segment. Over 317–337 (QQQEQQPASGGGGQNGQQAMS) the chain is Extracellular. Residues 338–358 (LAILRVIRLVRVFRIFKLSRH) traverse the membrane as a helical; Voltage-sensor segment. Topologically, residues 359–373 (SKGLQILGKTLQASM) are cytoplasmic. An S4-S5 linker region spans residues 360 to 373 (KGLQILGKTLQASM). The helical transmembrane segment at 374 to 395 (RELGLLIFFLFIGVILFSSAVY) threads the bilayer. Residues 396–409 (FAEADDDDSLFPSI) lie on the Extracellular side of the membrane. An intramembrane region (helical) is located at residues 410 to 421 (PDAFWWAVVTMT). Residues 422–427 (TVGYGD) carry the Selectivity filter motif. An intramembrane segment occupies 422-429 (TVGYGDMY). The Extracellular portion of the chain corresponds to 430 to 436 (PMTVGGK). A helical membrane pass occupies residues 437 to 465 (IVGSLCAIAGVLTIALPVPVIVSNFNYFY). Residues 466-529 (HRETEQEEQG…YAEKRMLTEV (64 aa)) are Cytoplasmic-facing. Residues 488–513 (DLRATDNGLGKPDFPEANRERRPSYL) are disordered. A compositionally biased stretch (basic and acidic residues) spans 500–510 (DFPEANRERRP). Ser511 is modified (phosphoserine; by PKA). The PDZ-binding signature appears at 527 to 529 (TEV).

Belongs to the potassium channel family. A (Shaker) (TC 1.A.1.2) subfamily. Kv1.6/KCNA6 sub-subfamily. In terms of assembly, homotetramer and heterotetramer of potassium channel proteins. Interacts with KCNAB1 and KCNAB2.

The protein resides in the cell membrane. It carries out the reaction K(+)(in) = K(+)(out). Functionally, voltage-gated potassium channel that mediates transmembrane potassium transport in excitable membranes. Forms tetrameric potassium-selective channels through which potassium ions pass in accordance with their electrochemical gradient. The channel alternates between opened and closed conformations in response to the voltage difference across the membrane. Can form functional homotetrameric channels and heterotetrameric channels that contain variable proportions of KCNA1, KCNA2, KCNA4, KCNA6, and possibly other family members as well; channel properties depend on the type of alpha subunits that are part of the channel. Channel properties are modulated by cytoplasmic beta subunits that regulate the subcellular location of the alpha subunits and promote rapid inactivation. Homotetrameric channels display rapid activation and slow inactivation. The sequence is that of Potassium voltage-gated channel subfamily A member 6 (KCNA6) from Homo sapiens (Human).